The chain runs to 295 residues: GTPase Era (295 aa).

In terms of domain architecture, Era-type G spans 7-176 (KTVSVCIIGR…ITSKAKIAPW (170 aa)). The tract at residues 15-22 (GRPNSGKS) is G1. 15-22 (GRPNSGKS) is a binding site for GTP. Residues 41–45 (QTTRS) form a G2 region. Residues 62–65 (DTPG) form a G3 region. GTP-binding positions include 62–66 (DTPGI) and 124–127 (NKID). The tract at residues 124 to 127 (NKID) is G4. A G5 region spans residues 152–154 (ISA). In terms of domain architecture, KH type-2 spans 204 to 281 (LQQELPYKLT…HLFLFVKVRE (78 aa)).

Belongs to the TRAFAC class TrmE-Era-EngA-EngB-Septin-like GTPase superfamily. Era GTPase family. As to quaternary structure, monomer.

The protein localises to the cytoplasm. It localises to the cell inner membrane. In terms of biological role, an essential GTPase that binds both GDP and GTP, with rapid nucleotide exchange. Plays a role in 16S rRNA processing and 30S ribosomal subunit biogenesis and possibly also in cell cycle regulation and energy metabolism. This chain is GTPase Era, found in Rickettsia bellii (strain OSU 85-389).